Here is a 77-residue protein sequence, read N- to C-terminus: Translation initiation factor IF-1, chloroplastic (77 aa).

The region spanning 1 to 72 (MRKQNLIEME…TKGRITYRLR (72 aa)) is the S1-like domain.

The protein belongs to the IF-1 family. As to quaternary structure, component of the 30S ribosomal translation pre-initiation complex which assembles on the 30S ribosome in the order IF-2 and IF-3, IF-1 and N-formylmethionyl-tRNA(fMet); mRNA recruitment can occur at any time during PIC assembly.

Its subcellular location is the plastid. It is found in the chloroplast. Functionally, one of the essential components for the initiation of protein synthesis. Stabilizes the binding of IF-2 and IF-3 on the 30S subunit to which N-formylmethionyl-tRNA(fMet) subsequently binds. Helps modulate mRNA selection, yielding the 30S pre-initiation complex (PIC). Upon addition of the 50S ribosomal subunit IF-1, IF-2 and IF-3 are released leaving the mature 70S translation initiation complex. The sequence is that of Translation initiation factor IF-1, chloroplastic from Staurastrum punctulatum (Green alga).